Consider the following 411-residue polypeptide: NAD-dependent dihydropyrimidine dehydrogenase subunit PreA (411 aa).

Substrate-binding positions include Asn-76 and 134-136 (NFS). Cys-137 acts as the Nucleophile in catalysis. 201–202 (NT) is a substrate binding site. 4Fe-4S ferredoxin-type domains are found at residues 335–367 (VYPR…WSEK) and 369–398 (RTPH…LGEV). [4Fe-4S] cluster is bound by residues Cys-344, Cys-347, Cys-350, Cys-354, Cys-378, Cys-381, Cys-384, and Cys-388.

This sequence belongs to the dihydropyrimidine dehydrogenase family. In terms of assembly, heterotetramer of 2 PreA and 2 PreT subunits. [4Fe-4S] cluster is required as a cofactor.

It catalyses the reaction 5,6-dihydrouracil + NAD(+) = uracil + NADH + H(+). The enzyme catalyses 5,6-dihydrothymine + NAD(+) = thymine + NADH + H(+). Its function is as follows. Involved in pyrimidine base degradation. Catalyzes physiologically the reduction of uracil to 5,6-dihydrouracil (DHU) by using NADH as a specific cosubstrate. It also catalyzes the reverse reaction and the reduction of thymine to 5,6-dihydrothymine (DHT). The sequence is that of NAD-dependent dihydropyrimidine dehydrogenase subunit PreA (preA) from Escherichia coli O157:H7.